Here is a 502-residue protein sequence, read N- to C-terminus: Cytochrome P450 CYP94D109 (502 aa).

Residues 3–23 (SLSLIFISFITLIVFLVVSAS) form a helical membrane-spanning segment. A heme-binding site is contributed by Cys437.

The protein belongs to the cytochrome P450 family. In terms of tissue distribution, mainly expressed in leaves and, at low levels, in roots, fruits and stems.

Its subcellular location is the membrane. It functions in the pathway steroid metabolism; cholesterol metabolism. In terms of biological role, involved in the biosynthesis of spiroketal steroid and saponin natural products from cholesterol such as diosgenin and analogs (e.g. furostanol and spirostanol), plant defense compounds used as main precursors for the industrial production of steroid hormones. During the 5,6-spiroketalization of cholesterol, may catalyze the 27-monohydroxylation of furostanol-type steroid to an intermediate product that undergoes a stereospecific formation of the terminal heterocycle to yield diosgenin. In Paris polyphylla (Daiswa polyphylla), this protein is Cytochrome P450 CYP94D109.